The primary structure comprises 20 residues: Trypsin inhibitor (20 aa).

The disordered stretch occupies residues 1–20; sequence APSDTTIAETLTITEEFFPD.

Hemolymph.

It localises to the secreted. The protein localises to the extracellular space. In terms of biological role, inhibits trypsin stoichiometrically. Also inhibits chymotrypsin very weakly. The chain is Trypsin inhibitor from Mythimna unipuncta (Armyworm moth).